A 308-amino-acid chain; its full sequence is Pseudouridine-5'-phosphate glycosidase (308 aa).

Catalysis depends on Glu-26, which acts as the Proton donor. Residues Lys-87 and Val-107 each coordinate substrate. Asp-139 lines the Mn(2+) pocket. 141 to 143 (SAD) provides a ligand contact to substrate. Catalysis depends on Lys-160, which acts as the Nucleophile.

It belongs to the pseudouridine-5'-phosphate glycosidase family. In terms of assembly, homotrimer. It depends on Mn(2+) as a cofactor.

The enzyme catalyses D-ribose 5-phosphate + uracil = psi-UMP + H2O. In terms of biological role, catalyzes the reversible cleavage of pseudouridine 5'-phosphate (PsiMP) to ribose 5-phosphate and uracil. Functions biologically in the cleavage direction, as part of a pseudouridine degradation pathway. This Legionella pneumophila subsp. pneumophila (strain Philadelphia 1 / ATCC 33152 / DSM 7513) protein is Pseudouridine-5'-phosphate glycosidase.